Here is a 1207-residue protein sequence, read N- to C-terminus: Ras GTPase-activating protein gap-2 (1207 aa).

2 disordered regions span residues 1 to 29 (MKVI…SCTK) and 221 to 316 (RMSS…GSLR). The 344-residue stretch at 40–383 (PPICHGWLIV…WMENLRKTMN (344 aa)) folds into the PH domain. A compositionally biased stretch (low complexity) spans 223 to 236 (SSSSHNLSTRLSGS). Composition is skewed to polar residues over residues 237–247 (TQNLNQPTNAY) and 286–297 (ASNTPSRDSSLY). The 117-residue stretch at 374-490 (WMENLRKTMN…SSRSPVERWY (117 aa)) folds into the C2 domain. Over residues 495-504 (SHSDSGTSRI) the composition is skewed to polar residues. Positions 495–516 (SHSDSGTSRIASALGGKSSSQE) are disordered. Positions 579–789 (NLAKEFLCDL…HRMKDFLLRI (211 aa)) constitute a Ras-GAP domain. Disordered stretches follow at residues 856–903 (GVFH…LGRS), 923–1013 (FQTP…SSSS), 1086–1107 (ATGG…RASR), and 1163–1207 (LKSK…VVPN). Polar residues-rich tracts occupy residues 862–876 (MVQQ…SPQQ) and 891–903 (TPPT…LGRS). Low complexity predominate over residues 939 to 953 (TGTSSSRTSDKTTSS). Positions 955-972 (EIRDDTDSDFELREDRGR) are enriched in basic and acidic residues. Residues 985-1013 (ASPSSSQQASSGYLSNNPSRSSYSNSSSS) are compositionally biased toward low complexity. Positions 1181 to 1207 (SGASEDSYDSLSSLDRPSRQSLVVVPN) are enriched in low complexity.

In terms of tissue distribution, mainly expressed in gonads and vulval cells. Isoform c in expressed in pharyngeal epithelial cells and several rectal/blast cells in the tail region. Isoform f is weakly expressed in four cells symmetrically located in the vulval region. Isoform g is strongly expressed in the pharyngeal muscle cells m6 in addition to several cells in the tail region.

The protein localises to the cytoplasm. In terms of biological role, GTPase-activating protein, which acts as a negative regulator for the member of the Ras family let-60. Probably decreases the signaling activity of Ras by stimulating its intrinsic GTPase activity, thereby lowering the levels of GTP-bound, active Ras. The different isoforms may play a distinct role in specific tissues. This chain is Ras GTPase-activating protein gap-2 (gap-2), found in Caenorhabditis elegans.